The sequence spans 889 residues: DNA mismatch repair protein MutS (889 aa).

641 to 648 (GPNMAGKS) contributes to the ATP binding site.

It belongs to the DNA mismatch repair MutS family.

In terms of biological role, this protein is involved in the repair of mismatches in DNA. It is possible that it carries out the mismatch recognition step. This protein has a weak ATPase activity. In Orientia tsutsugamushi (strain Boryong) (Rickettsia tsutsugamushi), this protein is DNA mismatch repair protein MutS.